Consider the following 189-residue polypeptide: Ornithine decarboxylase antizyme 2 (189 aa).

At Ser186 the chain carries Phosphoserine.

This sequence belongs to the ODC antizyme family. In terms of assembly, interacts with ODC1 and thereby sterically blocks ODC homodimerization. Interacts with AZIN2; this interaction disrupts the interaction between the antizyme and ODC1.

It is found in the nucleus. Ornithine decarboxylase (ODC) antizyme protein that negatively regulates ODC activity and intracellular polyamine biosynthesis and uptake in response to increased intracellular polyamine levels. Binds to ODC monomers, inhibiting the assembly of the functional ODC homodimers. Does not target the ODC monomers for degradation, which allows a protein synthesis-independent restoration of ODC activity. Involved in the translocation of AZIN2 from ER-Golgi intermediate compartment (ERGIC) to the cytosol. This is Ornithine decarboxylase antizyme 2 (Oaz2) from Mus musculus (Mouse).